Consider the following 619-residue polypeptide: UvrABC system protein C (619 aa).

The 79-residue stretch at Thr20–Val98 folds into the GIY-YIG domain. The UVR domain occupies Asp207–Met242.

Belongs to the UvrC family. As to quaternary structure, interacts with UvrB in an incision complex.

The protein localises to the cytoplasm. The UvrABC repair system catalyzes the recognition and processing of DNA lesions. UvrC both incises the 5' and 3' sides of the lesion. The N-terminal half is responsible for the 3' incision and the C-terminal half is responsible for the 5' incision. In Xanthomonas axonopodis pv. citri (strain 306), this protein is UvrABC system protein C.